The following is a 230-amino-acid chain: Large ribosomal subunit protein uL1 (230 aa).

Belongs to the universal ribosomal protein uL1 family. In terms of assembly, part of the 50S ribosomal subunit.

In terms of biological role, binds directly to 23S rRNA. The L1 stalk is quite mobile in the ribosome, and is involved in E site tRNA release. Its function is as follows. Protein L1 is also a translational repressor protein, it controls the translation of the L11 operon by binding to its mRNA. The sequence is that of Large ribosomal subunit protein uL1 from Leptospira interrogans serogroup Icterohaemorrhagiae serovar copenhageni (strain Fiocruz L1-130).